Here is a 358-residue protein sequence, read N- to C-terminus: MIGFAPISAPDALAEAAARARQDALTKPRGALGRLEDLSAWVASCQGQCPPRQFQRARVVVFAGDHGVTRSGVSAYPPDVTAQMVANIDGGGAAINALADVAGATVRVVDLAVDAEALSEQIGAHKVRRGSGDIATEDALTDDQTAAAIAAGQQIADAEVDAGADLLIAGDMGIGNTTPAAVLVAALTNTEPVAVVGFGTGVDDATWSRKTAAVRDALFRSARVLPDPVALLRCCGGADLAAMAGFCAQAAVRRTPLLLDGMAVTAAALVAERLAPGARQWWQAGHRSTEPGHQLALTALALDPVVDLRMRLGEGTGATVALPVLRAAVAALSSMATFAEAGVSTACDDAGATEPPES.

The Proton acceptor role is filled by Glu314.

This sequence belongs to the CobT family.

The catalysed reaction is 5,6-dimethylbenzimidazole + nicotinate beta-D-ribonucleotide = alpha-ribazole 5'-phosphate + nicotinate + H(+). The protein operates within nucleoside biosynthesis; alpha-ribazole biosynthesis; alpha-ribazole from 5,6-dimethylbenzimidazole: step 1/2. Its function is as follows. Catalyzes the synthesis of alpha-ribazole-5'-phosphate from nicotinate mononucleotide (NAMN) and 5,6-dimethylbenzimidazole (DMB). This is Nicotinate-nucleotide--dimethylbenzimidazole phosphoribosyltransferase from Mycobacterium marinum (strain ATCC BAA-535 / M).